We begin with the raw amino-acid sequence, 216 residues long: Uracil phosphoribosyltransferase (216 aa).

5-phospho-alpha-D-ribose 1-diphosphate is bound by residues Arg85, Arg110, and 135–143 (DPMVATGYS). Residues Ile200 and 205-207 (GDA) each bind uracil. Residue Asp206 participates in 5-phospho-alpha-D-ribose 1-diphosphate binding.

This sequence belongs to the UPRTase family. Mg(2+) serves as cofactor.

It catalyses the reaction UMP + diphosphate = 5-phospho-alpha-D-ribose 1-diphosphate + uracil. It functions in the pathway pyrimidine metabolism; UMP biosynthesis via salvage pathway; UMP from uracil: step 1/1. With respect to regulation, allosterically activated by GTP. In terms of biological role, catalyzes the conversion of uracil and 5-phospho-alpha-D-ribose 1-diphosphate (PRPP) to UMP and diphosphate. The sequence is that of Uracil phosphoribosyltransferase from Ralstonia pickettii (strain 12J).